Here is a 263-residue protein sequence, read N- to C-terminus: Proliferating cell nuclear antigen (263 aa).

The DNA-binding element occupies arginine 61–lysine 80.

It belongs to the PCNA family. As to quaternary structure, homotrimer. Forms a complex with activator 1 heteropentamer in the presence of ATP.

The protein resides in the nucleus. Its function is as follows. This protein is an auxiliary protein of DNA polymerase delta and is involved in the control of eukaryotic DNA replication by increasing the polymerase's processibility during elongation of the leading strand. The polypeptide is Proliferating cell nuclear antigen (pcn-1) (Caenorhabditis elegans).